The chain runs to 477 residues: Glycogen synthase (477 aa).

An ADP-alpha-D-glucose-binding site is contributed by Lys-15.

This sequence belongs to the glycosyltransferase 1 family. Bacterial/plant glycogen synthase subfamily.

It carries out the reaction [(1-&gt;4)-alpha-D-glucosyl](n) + ADP-alpha-D-glucose = [(1-&gt;4)-alpha-D-glucosyl](n+1) + ADP + H(+). It participates in glycan biosynthesis; glycogen biosynthesis. Its function is as follows. Synthesizes alpha-1,4-glucan chains using ADP-glucose. The chain is Glycogen synthase from Shigella dysenteriae serotype 1 (strain Sd197).